The following is a 666-amino-acid chain: tRNA 5-methylaminomethyl-2-thiouridine biosynthesis bifunctional protein MnmC (666 aa).

A tRNA (mnm(5)s(2)U34)-methyltransferase region spans residues Met-1–Glu-253. The tract at residues Val-283 to Pro-666 is FAD-dependent cmnm(5)s(2)U34 oxidoreductase.

In the N-terminal section; belongs to the methyltransferase superfamily. tRNA (mnm(5)s(2)U34)-methyltransferase family. The protein in the C-terminal section; belongs to the DAO family. Requires FAD as cofactor.

Its subcellular location is the cytoplasm. It carries out the reaction 5-aminomethyl-2-thiouridine(34) in tRNA + S-adenosyl-L-methionine = 5-methylaminomethyl-2-thiouridine(34) in tRNA + S-adenosyl-L-homocysteine + H(+). Catalyzes the last two steps in the biosynthesis of 5-methylaminomethyl-2-thiouridine (mnm(5)s(2)U) at the wobble position (U34) in tRNA. Catalyzes the FAD-dependent demodification of cmnm(5)s(2)U34 to nm(5)s(2)U34, followed by the transfer of a methyl group from S-adenosyl-L-methionine to nm(5)s(2)U34, to form mnm(5)s(2)U34. The sequence is that of tRNA 5-methylaminomethyl-2-thiouridine biosynthesis bifunctional protein MnmC from Legionella pneumophila (strain Lens).